We begin with the raw amino-acid sequence, 300 residues long: Ribosomal protein L11 methyltransferase (300 aa).

4 residues coordinate S-adenosyl-L-methionine: threonine 152, glycine 173, aspartate 195, and asparagine 234.

The protein belongs to the methyltransferase superfamily. PrmA family.

The protein localises to the cytoplasm. The enzyme catalyses L-lysyl-[protein] + 3 S-adenosyl-L-methionine = N(6),N(6),N(6)-trimethyl-L-lysyl-[protein] + 3 S-adenosyl-L-homocysteine + 3 H(+). Methylates ribosomal protein L11. This chain is Ribosomal protein L11 methyltransferase, found in Burkholderia pseudomallei (strain 1710b).